The following is an 876-amino-acid chain: Pre-mRNA-splicing factor ATP-dependent RNA helicase-like protein PRP2 (876 aa).

Residues 1 to 111 (MSSITSETGK…KGLLGDSENE (111 aa)) are disordered. At S2 the chain carries N-acetylserine. The span at 61–70 (VFSNTNQGPE) shows a compositional bias: polar residues. In terms of domain architecture, Helicase ATP-binding spans 233-399 (LQEIKKNQVL…FDNCPIFNVP (167 aa)). 246–253 (GETGSGKT) serves as a coordination point for ATP. The DEAH box signature appears at 346-349 (DEAH). The 175-residue stretch at 424–598 (TIFQIHTTQS…NTVLLLLSLG (175 aa)) folds into the Helicase C-terminal domain.

This sequence belongs to the DEAD box helicase family. DEAH subfamily. In terms of assembly, interacts directly with pre-mRNA. According to PubMed:2251118, associated with spliceosomes prior to and throughout step 1 of the splicing reaction. According to PubMed:8943336, it leaves the spliceosome before reaction 1. Interacts with SPP2.

Its subcellular location is the nucleus. The catalysed reaction is ATP + H2O = ADP + phosphate + H(+). Its function is as follows. Involved in pre-mRNA splicing. Is required together with ATP and at least one other factor, for the first cleavage-ligation reaction. Functions as a molecular motor in the activation of the precatalytic spliceosome for the first transesterification reaction of pre-mRNA splicing by hydrolyzing ATP to cause the activation of the spliceosome without the occurrence of splicing. Capable of hydrolyzing nucleoside triphosphates in the presence of single-stranded RNAs such as poly(U). This chain is Pre-mRNA-splicing factor ATP-dependent RNA helicase-like protein PRP2 (PRP2), found in Saccharomyces cerevisiae (strain ATCC 204508 / S288c) (Baker's yeast).